The following is an 83-amino-acid chain: Kappa-theraphotoxin-Cg2b (83 aa).

The first 21 residues, 1–21, serve as a signal peptide directing secretion; that stretch reads MKGSAFAIILGLVVLCACSFA. A propeptide spanning residues 22–53 is cleaved from the precursor; sequence EDEQDQFASPNELLRSMFLESRHELIPEVEGR. Cystine bridges form between cysteine 55–cysteine 69, cysteine 62–cysteine 74, and cysteine 68–cysteine 78.

This sequence belongs to the neurotoxin 30 (phrixotoxin) family. In terms of tissue distribution, expressed by the venom gland.

The protein resides in the secreted. In terms of biological role, probable ion channel inhibitor. In Chilobrachys guangxiensis (Chinese earth tiger tarantula), this protein is Kappa-theraphotoxin-Cg2b.